The sequence spans 291 residues: N-acetylmannosamine kinase (291 aa).

Residues 5–12 and 132–139 contribute to the ATP site; these read AIDIGGTK and GVGGGVVC. His156, Cys166, Cys168, and Cys173 together coordinate Zn(2+).

This sequence belongs to the ROK (NagC/XylR) family. NanK subfamily. Homodimer.

The enzyme catalyses an N-acyl-D-mannosamine + ATP = an N-acyl-D-mannosamine 6-phosphate + ADP + H(+). It functions in the pathway amino-sugar metabolism; N-acetylneuraminate degradation; D-fructose 6-phosphate from N-acetylneuraminate: step 2/5. In terms of biological role, catalyzes the phosphorylation of N-acetylmannosamine (ManNAc) to ManNAc-6-P. The chain is N-acetylmannosamine kinase from Salmonella arizonae (strain ATCC BAA-731 / CDC346-86 / RSK2980).